The chain runs to 380 residues: Alkanesulfonate monooxygenase (380 aa).

The protein belongs to the SsuD family. As to quaternary structure, homotetramer.

It carries out the reaction an alkanesulfonate + FMNH2 + O2 = an aldehyde + FMN + sulfite + H2O + 2 H(+). In terms of biological role, catalyzes the desulfonation of aliphatic sulfonates. This Pectobacterium atrosepticum (strain SCRI 1043 / ATCC BAA-672) (Erwinia carotovora subsp. atroseptica) protein is Alkanesulfonate monooxygenase.